Reading from the N-terminus, the 251-residue chain is Hydroxyacylglutathione hydrolase (251 aa).

Zn(2+) contacts are provided by His53, His55, Asp57, His58, His110, Asp127, and His165.

It belongs to the metallo-beta-lactamase superfamily. Glyoxalase II family. Monomer. Requires Zn(2+) as cofactor.

The catalysed reaction is an S-(2-hydroxyacyl)glutathione + H2O = a 2-hydroxy carboxylate + glutathione + H(+). It functions in the pathway secondary metabolite metabolism; methylglyoxal degradation; (R)-lactate from methylglyoxal: step 2/2. Functionally, thiolesterase that catalyzes the hydrolysis of S-D-lactoyl-glutathione to form glutathione and D-lactic acid. The chain is Hydroxyacylglutathione hydrolase from Shigella boydii serotype 4 (strain Sb227).